Reading from the N-terminus, the 187-residue chain is Frataxin, mitochondrial (187 aa).

This sequence belongs to the frataxin family. Monomer. Oligomer. Interacts with NIFS1.

The protein resides in the mitochondrion. It carries out the reaction 4 Fe(2+) + O2 + 4 H(+) = 4 Fe(3+) + 2 H2O. In terms of biological role, promotes the biosynthesis of heme as well as the assembly and repair of iron-sulfur clusters by delivering Fe(2+) to proteins involved in these pathways. May play a role in the protection against iron-catalyzed oxidative stress through its ability to catalyze the oxidation of Fe(2+) to Fe(3+). May be able to store large amounts of the metal in the form of a ferrihydrite mineral by oligomerization. Binds to the mitochondrial cysteine desulfurase NIFS1 and increases its activity. The polypeptide is Frataxin, mitochondrial (FH) (Arabidopsis thaliana (Mouse-ear cress)).